The following is a 482-amino-acid chain: Probable glycine dehydrogenase (decarboxylating) subunit 2 (482 aa).

K267 carries the N6-(pyridoxal phosphate)lysine modification.

Belongs to the GcvP family. C-terminal subunit subfamily. The glycine cleavage system is composed of four proteins: P, T, L and H. In this organism, the P 'protein' is a heterodimer of two subunits. Pyridoxal 5'-phosphate serves as cofactor.

It catalyses the reaction N(6)-[(R)-lipoyl]-L-lysyl-[glycine-cleavage complex H protein] + glycine + H(+) = N(6)-[(R)-S(8)-aminomethyldihydrolipoyl]-L-lysyl-[glycine-cleavage complex H protein] + CO2. Its function is as follows. The glycine cleavage system catalyzes the degradation of glycine. The P protein binds the alpha-amino group of glycine through its pyridoxal phosphate cofactor; CO(2) is released and the remaining methylamine moiety is then transferred to the lipoamide cofactor of the H protein. This chain is Probable glycine dehydrogenase (decarboxylating) subunit 2, found in Aquifex aeolicus (strain VF5).